The following is a 185-amino-acid chain: Prenylated Rab acceptor protein 1 (185 aa).

The Cytoplasmic portion of the chain corresponds to Met-1 to Tyr-78. The required for interaction with prenylated RAB3A and VAMP2 stretch occupies residues Ala-30 to Phe-54. 2 helical membrane passes run Val-79–Pro-94 and Met-95–Leu-112. At Arg-113–Gln-131 the chain is on the cytoplasmic side. 2 consecutive transmembrane segments (helical) span residues Tyr-132 to Ala-148 and Gly-149 to Ser-165. Positions Ser-165 to Val-185 are required for interaction with GDI1. Residues His-166 to Val-185 lie on the Cytoplasmic side of the membrane. The required for interaction with prenylated RAB3A and VAMP2 stretch occupies residues Val-175–Val-185. The homodimerization stretch occupies residues Val-175–Val-185.

The protein belongs to the PRA1 family. Homodimer. Interacts with VAMP2 (synaptobrevin-2), prenylated Rab proteins, GDI1, NRDG1 and PCLO.

The protein resides in the cell membrane. It localises to the cytoplasm. It is found in the golgi apparatus. The protein localises to the cytoplasmic vesicle. Its subcellular location is the secretory vesicle. The protein resides in the synaptic vesicle. Functionally, general Rab protein regulator required for vesicle formation from the Golgi complex. May control vesicle docking and fusion by mediating the action of Rab GTPases to the SNARE complexes. In addition it inhibits the removal of Rab GTPases from the membrane by GDI1. The sequence is that of Prenylated Rab acceptor protein 1 (RABAC1) from Sus scrofa (Pig).